The sequence spans 424 residues: Anaerobic glycerol-3-phosphate dehydrogenase subunit B (424 aa).

Belongs to the anaerobic G-3-P dehydrogenase subunit B family. In terms of assembly, composed of a catalytic GlpA/B dimer and of membrane bound GlpC. Requires FMN as cofactor.

It carries out the reaction a quinone + sn-glycerol 3-phosphate = dihydroxyacetone phosphate + a quinol. It participates in polyol metabolism; glycerol degradation via glycerol kinase pathway; glycerone phosphate from sn-glycerol 3-phosphate (anaerobic route): step 1/1. Conversion of glycerol 3-phosphate to dihydroxyacetone. Uses fumarate or nitrate as electron acceptor. This chain is Anaerobic glycerol-3-phosphate dehydrogenase subunit B, found in Yersinia pestis bv. Antiqua (strain Antiqua).